The primary structure comprises 65 residues: Large ribosomal subunit protein bL35 (65 aa).

It belongs to the bacterial ribosomal protein bL35 family.

The sequence is that of Large ribosomal subunit protein bL35 from Aromatoleum aromaticum (strain DSM 19018 / LMG 30748 / EbN1) (Azoarcus sp. (strain EbN1)).